Reading from the N-terminus, the 408-residue chain is Multidrug resistance protein MdtG (408 aa).

11 helical membrane-spanning segments follow: residues 16 to 36 (LIVA…VMPF), 58 to 78 (IVFS…GGLA), 92 to 112 (LGMG…QFLI), 115 to 135 (ALLG…ATQV), 146 to 166 (TLST…GLLA), 173 to 193 (PVFF…LFCI), 224 to 244 (LFVT…ILTL), 256 to 276 (VAFI…LSAP), 290 to 310 (ILIT…YVQT), 319 to 339 (FLLG…LVYN), and 378 to 398 (AVFL…WNSL).

Belongs to the major facilitator superfamily. DHA1 family. MdtG (TC 2.A.1.2.20) subfamily.

The protein resides in the cell inner membrane. Its function is as follows. Confers resistance to fosfomycin and deoxycholate. This is Multidrug resistance protein MdtG from Escherichia coli O7:K1 (strain IAI39 / ExPEC).